The following is a 119-amino-acid chain: Large ribosomal subunit protein bL19 (119 aa).

It belongs to the bacterial ribosomal protein bL19 family.

Its function is as follows. This protein is located at the 30S-50S ribosomal subunit interface and may play a role in the structure and function of the aminoacyl-tRNA binding site. The polypeptide is Large ribosomal subunit protein bL19 (Pseudarthrobacter chlorophenolicus (strain ATCC 700700 / DSM 12829 / CIP 107037 / JCM 12360 / KCTC 9906 / NCIMB 13794 / A6) (Arthrobacter chlorophenolicus)).